A 179-amino-acid chain; its full sequence is ATP-dependent protease subunit HslV (179 aa).

The active site involves Thr7. Na(+) contacts are provided by Gly162, Cys165, and Thr168.

This sequence belongs to the peptidase T1B family. HslV subfamily. A double ring-shaped homohexamer of HslV is capped on each side by a ring-shaped HslU homohexamer. The assembly of the HslU/HslV complex is dependent on binding of ATP.

Its subcellular location is the cytoplasm. It catalyses the reaction ATP-dependent cleavage of peptide bonds with broad specificity.. Its activity is regulated as follows. Allosterically activated by HslU binding. Its function is as follows. Protease subunit of a proteasome-like degradation complex believed to be a general protein degrading machinery. The protein is ATP-dependent protease subunit HslV of Bordetella avium (strain 197N).